A 599-amino-acid chain; its full sequence is Elongation factor 4 (599 aa).

The 183-residue stretch at 5–187 (SHIRNFSIIA…ALVNGIPAPV (183 aa)) folds into the tr-type G domain. GTP contacts are provided by residues 17–22 (DHGKST) and 134–137 (NKMD).

The protein belongs to the TRAFAC class translation factor GTPase superfamily. Classic translation factor GTPase family. LepA subfamily.

It is found in the cell inner membrane. The catalysed reaction is GTP + H2O = GDP + phosphate + H(+). In terms of biological role, required for accurate and efficient protein synthesis under certain stress conditions. May act as a fidelity factor of the translation reaction, by catalyzing a one-codon backward translocation of tRNAs on improperly translocated ribosomes. Back-translocation proceeds from a post-translocation (POST) complex to a pre-translocation (PRE) complex, thus giving elongation factor G a second chance to translocate the tRNAs correctly. Binds to ribosomes in a GTP-dependent manner. The sequence is that of Elongation factor 4 from Teredinibacter turnerae (strain ATCC 39867 / T7901).